The chain runs to 126 residues: Large ribosomal subunit protein bL20c (126 aa).

It belongs to the bacterial ribosomal protein bL20 family.

It localises to the plastid. It is found in the chloroplast. Its function is as follows. Binds directly to 23S ribosomal RNA and is necessary for the in vitro assembly process of the 50S ribosomal subunit. It is not involved in the protein synthesizing functions of that subunit. The chain is Large ribosomal subunit protein bL20c from Illicium oligandrum (Star anise).